Here is a 307-residue protein sequence, read N- to C-terminus: MKGQQKVADIEEGTVRVQEEGAVATGEDPTSVAIASIQSAATFSDPNVKYVFRTENGGAQVMYRVIQVAEGQLDGQTEGTGAISGFPATQSMTQAVIQGAFTSDDNGETDASGPETHYTYFPTDSSTSVGGTPTTVVTTHNSDTLLGQAASTGTGQFYVMMSSQDVLQGGSQRSIAPRTHPYSPKSDGPRTTRDDKRRAQHNEVERRRRDKINNWIVQLSKIIPDCSMESTKTGQSKGGILSKACDYIQELRQSNLRLSEELQNLDQLQMDNEVLRQQVEDLKNNNLTLRTQLRHHGVEIIIKSDTH.

2 disordered regions span residues 104–131 (DDNG…SVGG) and 168–207 (QGGS…VERR). The segment covering 122–131 (PTDSSTSVGG) has biased composition (low complexity). Over residues 187-207 (DGPRTTRDDKRRAQHNEVERR) the composition is skewed to basic and acidic residues. The region spanning 196–251 (KRRAQHNEVERRRRDKINNWIVQLSKIIPDCSMESTKTGQSKGGILSKACDYIQEL) is the bHLH domain. The segment at 268-289 (LQMDNEVLRQQVEDLKNNNLTL) is leucine-zipper.

Efficient DNA binding requires dimerization with another bHLH protein. Binds DNA as a homodimer or a heterodimer. In terms of tissue distribution, oocyte and somatic tissue. Oocytic and somatic forms of this protein exist, probably as a result of post-translational modifications or minor splicing differences.

The protein resides in the nucleus. May act as a regulator of transcription factor IIIA (TFIIIA) gene expression. The polypeptide is Upstream stimulatory factor 1 (usf1) (Xenopus borealis (Kenyan clawed frog)).